A 311-amino-acid chain; its full sequence is Delta(1)-pyrroline-2-carboxylate reductase 2 (311 aa).

Belongs to the ornithine cyclodeaminase/mu-crystallin family.

The enzyme catalyses L-proline + NAD(+) = 1-pyrroline-2-carboxylate + NADH + H(+). The catalysed reaction is L-proline + NADP(+) = 1-pyrroline-2-carboxylate + NADPH + H(+). Its function is as follows. Catalyzes the reduction of Delta(1)-pyrroline-2-carboxylate (Pyr2C) to L-proline, using preferentially NADPH over NADH as the electron donor. May be involved in a degradation pathway that converts trans-3-hydroxy-L-proline (t3LHyp) to L-proline. The protein is Delta(1)-pyrroline-2-carboxylate reductase 2 of Burkholderia ambifaria (strain ATCC BAA-244 / DSM 16087 / CCUG 44356 / LMG 19182 / AMMD) (Burkholderia cepacia (strain AMMD)).